A 429-amino-acid chain; its full sequence is Acetylornithine aminotransferase (429 aa).

Residues 126–127 (GA) and phenylalanine 160 each bind pyridoxal 5'-phosphate. N(2)-acetyl-L-ornithine is bound at residue arginine 163. 251-254 (DEVQ) lines the pyridoxal 5'-phosphate pocket. Residue lysine 280 is modified to N6-(pyridoxal phosphate)lysine. Serine 307 lines the N(2)-acetyl-L-ornithine pocket. Threonine 308 is a pyridoxal 5'-phosphate binding site.

The protein belongs to the class-III pyridoxal-phosphate-dependent aminotransferase family. ArgD subfamily. Homodimer. Requires pyridoxal 5'-phosphate as cofactor.

It localises to the cytoplasm. The enzyme catalyses N(2)-acetyl-L-ornithine + 2-oxoglutarate = N-acetyl-L-glutamate 5-semialdehyde + L-glutamate. It functions in the pathway amino-acid biosynthesis; L-arginine biosynthesis; N(2)-acetyl-L-ornithine from L-glutamate: step 4/4. With respect to regulation, N-acetylornithine aminotransferase activity is stimulated by the addition of Mg(2+), Ca(2+) or Mn(2+), and inhibited by the addition of Zn(2+), Cu(2+), Co(2+) or Ni(2+). Functionally, catalyzes the reversible conversion of N-acetylornithine to N-acetylglutamate-5-semialdehyde. In vitro, also shows very low ornithine aminotransferase (OAT) and gamma-aminobutyrate aminotransferase (GABA-AT) activity, catalyzing the conversion of ornithine (Orn) to glutamate-5-semialdehyde and of gamma-aminobutyric acid (GABA) to succinate semialdehyde. It has been shown to function as a GABA-AT and contributes to closing the tricarboxylic acid cycle of Synechocystis sp. PCC6803 via the GABA shunt. However, the catalytic efficiency toward N-acetylornithine is 2500-fold and 10700-fold higher than that toward ornithine and gamma-aminobutyrate, respectively, indicating that the protein mainly functions as an N-acetylornithine aminotransferase. This Synechocystis sp. (strain ATCC 27184 / PCC 6803 / Kazusa) protein is Acetylornithine aminotransferase.